Reading from the N-terminus, the 313-residue chain is Ornithine carbamoyltransferase (313 aa).

Residues 57–60, R108, and 135–138 contribute to the carbamoyl phosphate site; these read STRT and HPTQ. L-ornithine contacts are provided by residues N167, D231, and 235 to 236; that span reads SM. Carbamoyl phosphate contacts are provided by residues 272–273 and R300; that span reads CL.

Belongs to the aspartate/ornithine carbamoyltransferase superfamily. OTCase family.

Its subcellular location is the cytoplasm. It carries out the reaction carbamoyl phosphate + L-ornithine = L-citrulline + phosphate + H(+). It functions in the pathway amino-acid biosynthesis; L-arginine biosynthesis; L-arginine from L-ornithine and carbamoyl phosphate: step 1/3. Its function is as follows. Reversibly catalyzes the transfer of the carbamoyl group from carbamoyl phosphate (CP) to the N(epsilon) atom of ornithine (ORN) to produce L-citrulline. In Thermotoga maritima (strain ATCC 43589 / DSM 3109 / JCM 10099 / NBRC 100826 / MSB8), this protein is Ornithine carbamoyltransferase.